We begin with the raw amino-acid sequence, 313 residues long: Olfactory receptor 10G3 (313 aa).

Residues 1 to 25 lie on the Extracellular side of the membrane; the sequence is MERINSTLLTAFILTGIPYPLRLRT. Asn5 is a glycosylation site (N-linked (GlcNAc...) asparagine). The helical transmembrane segment at 26–46 threads the bilayer; it reads LFFVFFFLIYILTQLGNLLIL. Residues 47–54 lie on the Cytoplasmic side of the membrane; sequence ITVWADPR. The chain crosses the membrane as a helical span at residues 55–76; that stretch reads LHARPMYIFLGVLSVIDMSISS. Topologically, residues 77–100 are extracellular; that stretch reads IIVPRLMMNFTLGVKPIPFGGCVA. The N-linked (GlcNAc...) asparagine glycan is linked to Asn85. Residues Cys98 and Cys190 are joined by a disulfide bond. Residues 101-121 form a helical membrane-spanning segment; that stretch reads QLYFYHFLGSTQCFLYTLMAY. The Cytoplasmic portion of the chain corresponds to 122 to 140; the sequence is DRYLAICQPLRYPVLMTAK. A helical transmembrane segment spans residues 141–161; it reads LSALLVAGAWMAGSIHGALQA. Residues 162–198 are Extracellular-facing; sequence ILTFRLPYCGPNQVDYFFCDIPAVLRLACADTTVNEL. The helical transmembrane segment at 199–218 threads the bilayer; the sequence is VTFVDIGVVVASCFSLILLS. Over 219-238 the chain is Cytoplasmic; the sequence is YIQIIQAILRIHTADGRRRA. The helical transmembrane segment at 239–259 threads the bilayer; sequence FSTCGAHVTVVTVYYVPCAFI. Residues 260–270 lie on the Extracellular side of the membrane; that stretch reads YLRPETNSPLD. The helical transmembrane segment at 271–291 threads the bilayer; sequence GAAALVPTAITPFLNPLIYTL. Residues 292-313 are Cytoplasmic-facing; the sequence is RNQEVKLALKRMLRSPRTPSEV.

The protein belongs to the G-protein coupled receptor 1 family.

It is found in the cell membrane. Its function is as follows. Odorant receptor. This Homo sapiens (Human) protein is Olfactory receptor 10G3 (OR10G3).